The chain runs to 729 residues: Polyribonucleotide nucleotidyltransferase (729 aa).

Mg(2+)-binding residues include aspartate 509 and aspartate 515. The region spanning 575–634 (PRVISVKIPVDKIGEVIGPKGKMINQIQADSGAEITVEDDGTIYIGAVDGPSAESARSAI) is the KH domain. Residues 646-718 (GERYLGTIVK…SRGKISLSPS (73 aa)) form the S1 motif domain.

Belongs to the polyribonucleotide nucleotidyltransferase family. Mg(2+) serves as cofactor.

Its subcellular location is the cytoplasm. It carries out the reaction RNA(n+1) + phosphate = RNA(n) + a ribonucleoside 5'-diphosphate. In terms of biological role, involved in mRNA degradation. Catalyzes the phosphorolysis of single-stranded polyribonucleotides processively in the 3'- to 5'-direction. This chain is Polyribonucleotide nucleotidyltransferase, found in Frankia casuarinae (strain DSM 45818 / CECT 9043 / HFP020203 / CcI3).